Consider the following 353-residue polypeptide: Mitochondrial ubiquitin ligase activator of nfkb 1 (353 aa).

Residues 1 to 8 lie on the Cytoplasmic side of the membrane; the sequence is MENGGRPS. A helical membrane pass occupies residues 9 to 29; the sequence is VGQVILLTTSSAITALFYSIY. Residues 30–239 are Mitochondrial intermembrane-facing; it reads RHKYRSVQTL…LLEKQEVQMR (210 aa). A helical membrane pass occupies residues 240 to 260; sequence WWRILSIVFGVASCITLFFIL. The Cytoplasmic segment spans residues 261-353; the sequence is RRKYRHYKEK…IDRIVPLYNS (93 aa). The segment at 303–341 adopts an RING-type zinc-finger fold; that stretch reads CSICLSTEKSCVFLECGHVCSCISCYQALPSPKKCPICR.

Homooligomer.

The protein resides in the mitochondrion outer membrane. The enzyme catalyses S-ubiquitinyl-[E2 ubiquitin-conjugating enzyme]-L-cysteine + [acceptor protein]-L-lysine = [E2 ubiquitin-conjugating enzyme]-L-cysteine + N(6)-ubiquitinyl-[acceptor protein]-L-lysine.. Its pathway is protein modification; protein ubiquitination. In terms of biological role, E3 ubiquitin-protein ligase that plays a role in the control of mitochondrial morphology. Promotes mitochondrial fragmentation and influences mitochondrial localization. Inhibits cell growth. E3 ubiquitin ligases accept ubiquitin from an E2 ubiquitin-conjugating enzyme in the form of a thioester and then directly transfer the ubiquitin to targeted substrates. The protein is Mitochondrial ubiquitin ligase activator of nfkb 1 (mul1) of Xenopus laevis (African clawed frog).